A 103-amino-acid polypeptide reads, in one-letter code: Small ribosomal subunit protein uS10 (103 aa).

Belongs to the universal ribosomal protein uS10 family. In terms of assembly, part of the 30S ribosomal subunit.

Involved in the binding of tRNA to the ribosomes. The polypeptide is Small ribosomal subunit protein uS10 (Desulfatibacillum aliphaticivorans).